The sequence spans 197 residues: Imidazoleglycerol-phosphate dehydratase (197 aa).

This sequence belongs to the imidazoleglycerol-phosphate dehydratase family.

The protein localises to the cytoplasm. The enzyme catalyses D-erythro-1-(imidazol-4-yl)glycerol 3-phosphate = 3-(imidazol-4-yl)-2-oxopropyl phosphate + H2O. Its pathway is amino-acid biosynthesis; L-histidine biosynthesis; L-histidine from 5-phospho-alpha-D-ribose 1-diphosphate: step 6/9. This is Imidazoleglycerol-phosphate dehydratase from Hahella chejuensis (strain KCTC 2396).